We begin with the raw amino-acid sequence, 179 residues long: Large ribosomal subunit protein uL5 (179 aa).

This sequence belongs to the universal ribosomal protein uL5 family. As to quaternary structure, part of the 50S ribosomal subunit; part of the 5S rRNA/L5/L18/L25 subcomplex. Contacts the 5S rRNA and the P site tRNA. Forms a bridge to the 30S subunit in the 70S ribosome.

In terms of biological role, this is one of the proteins that bind and probably mediate the attachment of the 5S RNA into the large ribosomal subunit, where it forms part of the central protuberance. In the 70S ribosome it contacts protein S13 of the 30S subunit (bridge B1b), connecting the 2 subunits; this bridge is implicated in subunit movement. Contacts the P site tRNA; the 5S rRNA and some of its associated proteins might help stabilize positioning of ribosome-bound tRNAs. The sequence is that of Large ribosomal subunit protein uL5 from Geobacillus kaustophilus (strain HTA426).